Here is a 556-residue protein sequence, read N- to C-terminus: Vacuolar protein 8 (556 aa).

Residue Gly-2 is the site of N-myristoyl glycine attachment. 3 S-palmitoyl cysteine lipidation sites follow: Cys-4, Cys-5, and Cys-7. ARM repeat units follow at residues 38 to 74, 75 to 115, 117 to 156, 158 to 197, 199 to 238, 242 to 281, 283 to 322, 324 to 364, and 408 to 447; these read NRSE…AFAE, VTEK…NLAV, DSNK…NLAT, DQNK…NMTH, LENR…NIAV, NRKK…NLAS, ANYQ…NISI, PLNE…NLAA, and DDLK…NLCS.

This sequence belongs to the beta-catenin family.

It is found in the vacuole membrane. Its function is as follows. Functions in both vacuole inheritance and protein targeting from the cytoplasm to vacuole. The protein is Vacuolar protein 8 (VAC8) of Komagataella pastoris (Yeast).